Here is a 380-residue protein sequence, read N- to C-terminus: Crotonobetainyl-CoA reductase (380 aa).

Belongs to the acyl-CoA dehydrogenase family. Homotetramer. FAD is required as a cofactor.

The protein localises to the cytoplasm. The enzyme catalyses 4-(trimethylamino)butanoyl-CoA + oxidized [electron-transfer flavoprotein] + H(+) = crotonobetainyl-CoA + reduced [electron-transfer flavoprotein]. It functions in the pathway amine and polyamine metabolism; carnitine metabolism. Functionally, catalyzes the reduction of crotonobetainyl-CoA to gamma-butyrobetainyl-CoA. The sequence is that of Crotonobetainyl-CoA reductase from Salmonella arizonae (strain ATCC BAA-731 / CDC346-86 / RSK2980).